The sequence spans 928 residues: MAKVPVLEDAFLPAQPSPQVSPEAQEECCVQLLGKGLLLYPEERVYLAAEAQPGGARGSAERGEHPELPVGVKSEMHLSNGNFSSEEEDGESHDSKTKAADLHLSQKKTITQMMKDKKKQTQLTLQWLEENYIVCEGVCLPRCILYAHYLDFCRKEKLEPACAATFGKTIRQKFPLLTTRRLGTRGHSKYHYYGIGIKESSAYYHSVYSGKGLTRFSGSKLKNEGGFTRKYSLSSKTGTLLPEFPSAQHLVYQGCISKDKVDTLIMMYKTHCQCILDNAINGNFEEIQHFLLHFWQGMPDHLLPLLENPVIIDIFCVCDSILYKVLTDVLIPATMQEMPESLLADIRNFAKNWEQWVVSSLENLPEALTDKKIPIVRRFVSSLKRQTSFLHLAQIARPALFDQHVVNSMVSDIEKVDLNSIGSQALLTISGSTDTESDIYTEHDSITVFQELKDLLKKNATVEAFIEWLDTVVEQRVIKTSKQNGRSLKKRAQDFLLKWSFFGARVMHNLTLNNASSFGSFHLIRMLLDEYILLAMETQFNNDKEQELQNLLDKYMKNSDASKAAFTASPSSCFLANRNKGSTASSDTVKNESHVETAYLPLSSSHPGGFPSALHPFPAGNTDTMPLTGQMELSQSTGHLMTPPISPAMASRGSVINQGPMAGRPPSVGPVLSAPSHCSTFPESIYPTHPQTNQDFYGTNSNYQTVFRAQPHPPSGLYPHRPEHGRCMAWSEQQLSRDFFSGSCAGSPYNSRPPSSYGPSSHSQDSHSMQFLNTGSFNFLSSTGAASCQGATLPPSSPNGYYGSSINYPESHRLGSMVNQHVSVISSVRSLPPYSDIHDPLNILDDSSRKQTSSFYADTSPSVACRTPVVASSLQTSIPSSSSQCMYGTSNQYPAQETLDSHGANSREMVSSLPPINTVFMGTAAGGT.

2 disordered regions span residues 1 to 22 (MAKVPVLEDAFLPAQPSPQVSP) and 53 to 102 (PGGA…AADL). Residues 92–101 (SHDSKTKAAD) show a composition bias toward basic and acidic residues. The segment at residues 124–199 (TLQWLEENYI…YHYYGIGIKE (76 aa)) is a DNA-binding region (RFX-type winged-helix).

The protein belongs to the RFX family. In terms of assembly, interacts with RFX3.

The protein localises to the nucleus. Its function is as follows. Transcription factor required to direct islet cell differentiation during endocrine pancreas development. Specifically required for the differentiation of 4 of the 5 islet cell types and for the production of insulin. Not required for pancreatic PP (polypeptide-producing) cells differentiation. Acts downstream of NEUROG3 and regulates the transcription factors involved in beta-cell maturation and function, thereby restricting the expression of the beta-cell differentiation and specification genes, and thus the beta-cell fate choice. Activates transcription by forming a heterodimer with RFX3 and binding to the X-box in the promoter of target genes. Involved in glucose-stimulated insulin secretion by promoting insulin and L-type calcium channel gene transcription. The sequence is that of DNA-binding protein RFX6 (RFX6) from Ailuropoda melanoleuca (Giant panda).